The primary structure comprises 46 residues: Large ribosomal subunit protein bL34 (46 aa).

Residues 1–17 show a composition bias toward basic residues; sequence MTKRTLRGSVRKKKRTS. The interval 1-26 is disordered; the sequence is MTKRTLRGSVRKKKRTSGFRARMETP.

It belongs to the bacterial ribosomal protein bL34 family.

The protein is Large ribosomal subunit protein bL34 (rpmH) of Pseudanabaena sp. (strain PCC 6903).